Reading from the N-terminus, the 126-residue chain is Protein ApaG (126 aa).

Residues 2–126 enclose the ApaG domain; the sequence is DISTPCIKCQ…FRLAIPNILN (125 aa).

The polypeptide is Protein ApaG (Vibrio atlanticus (strain LGP32) (Vibrio splendidus (strain Mel32))).